Consider the following 442-residue polypeptide: MSEIGSYHDTIFALSSGRLPSGVAVIRISGPKTRFVYETICQAIPEPRHAALLTFRSRNGDAIDRGLTLFFPAPHSFTGEDCAEFHLHGGKAVVEKMLAVLGELPGCRIAEAGEFTRRAFANGKMDLTIAEGLADLIAAETEGQRRLAMQVASGNQRKLYSEWRQRLINARAFIEAELDFADESDVPGSVSMQVWQQLSALKHEIEHHIASGKRAAMLRDGLHVVIVGAPNAGKSSLLNFLAGRDVAIISEEAGTTRDLLEVKLDLGGIPVYVTDTAGLRETDSVVEKIGIERARARMAEADLVLSLEDMSGPVSVTVEKIEAETWLIGTKADLGGSASGLWKYHISTMTGSGLEQLLDALQAFAEAKIGQIEDAVPTRQRHINLLRATIEEIEKAIEGDDLPLELRAENMRLASQFLGRITGDVDVEEILDVIFSQFCIGK.

(6S)-5-formyl-5,6,7,8-tetrahydrofolate-binding residues include Arg-27, Glu-84, and Lys-124. Positions 221-366 constitute a TrmE-type G domain; it reads GLHVVIVGAP…LLDALQAFAE (146 aa). GTP-binding positions include 231 to 236, 250 to 256, and 275 to 278; these read NAGKSS, SEEAGTT, and DTAG. Mg(2+) contacts are provided by Ser-235 and Thr-256. Lys-442 serves as a coordination point for (6S)-5-formyl-5,6,7,8-tetrahydrofolate.

This sequence belongs to the TRAFAC class TrmE-Era-EngA-EngB-Septin-like GTPase superfamily. TrmE GTPase family. As to quaternary structure, homodimer. Heterotetramer of two MnmE and two MnmG subunits. Requires K(+) as cofactor.

It localises to the cytoplasm. In terms of biological role, exhibits a very high intrinsic GTPase hydrolysis rate. Involved in the addition of a carboxymethylaminomethyl (cmnm) group at the wobble position (U34) of certain tRNAs, forming tRNA-cmnm(5)s(2)U34. In Brucella melitensis biotype 1 (strain ATCC 23456 / CCUG 17765 / NCTC 10094 / 16M), this protein is tRNA modification GTPase MnmE.